A 437-amino-acid polypeptide reads, in one-letter code: Elongation factor 1-alpha (437 aa).

The tr-type G domain occupies 4–229; sequence KPHMNLVVIG…DQLQPPAKPV (226 aa). The G1 stretch occupies residues 13–20; it reads GHVDHGKS. A GTP-binding site is contributed by 13–20; that stretch reads GHVDHGKS. Position 20 (Ser20) interacts with Mg(2+). Residues 69–73 form a G2 region; that stretch reads GITID. The segment at 90–93 is G3; that stretch reads DAPG. Residues 90–94 and 152–155 each bind GTP; these read DAPGH and NKMD. Positions 152–155 are G4; it reads NKMD. The G5 stretch occupies residues 193 to 195; sequence SAW.

This sequence belongs to the TRAFAC class translation factor GTPase superfamily. Classic translation factor GTPase family. EF-Tu/EF-1A subfamily.

Its subcellular location is the cytoplasm. It catalyses the reaction GTP + H2O = GDP + phosphate + H(+). GTP hydrolase that promotes the GTP-dependent binding of aminoacyl-tRNA to the A-site of ribosomes during protein biosynthesis. This Aeropyrum pernix (strain ATCC 700893 / DSM 11879 / JCM 9820 / NBRC 100138 / K1) protein is Elongation factor 1-alpha.